Consider the following 153-residue polypeptide: UPF0756 membrane protein Lm4b_01579 (153 aa).

A run of 4 helical transmembrane segments spans residues 6–26 (MLFL…SLII), 54–74 (WGVT…QIGF), 80–100 (SFKS…SILA), and 117–137 (LVFG…GPVI).

This sequence belongs to the UPF0756 family.

It is found in the cell membrane. This is UPF0756 membrane protein Lm4b_01579 from Listeria monocytogenes serotype 4b (strain CLIP80459).